The following is a 270-amino-acid chain: Glutamate racemase (270 aa).

Residues 7 to 8 and 39 to 40 each bind substrate; these read DS and YG. C70 (proton donor/acceptor) is an active-site residue. 71–72 provides a ligand contact to substrate; the sequence is NT. The Proton donor/acceptor role is filled by C194. 195–196 provides a ligand contact to substrate; it reads TH.

This sequence belongs to the aspartate/glutamate racemases family.

The enzyme catalyses L-glutamate = D-glutamate. The protein operates within cell wall biogenesis; peptidoglycan biosynthesis. Provides the (R)-glutamate required for cell wall biosynthesis. In Jannaschia sp. (strain CCS1), this protein is Glutamate racemase.